The primary structure comprises 530 residues: Pentatricopeptide repeat-containing protein At5g56310 (530 aa).

10 PPR repeats span residues 77–114, 115–149, 150–180, 181–211, 214–248, 249–283, 284–314, 315–349, 350–380, and 386–420; these read NTYLHNTMIRALSLLDEPNAHSIAITVYRKLWALCAKP, DTFTFPFVLKIAVRVSDVWFGRQIHGQVVVFGFDS, SVHVVTGLIQMYFSCGGLGDARKMFDEMLVK, DVNVWNALLAGYGKVGEMDEARSLLEMMPCW, NEVSWTCVISGYAKSGRASEAIEVFQRMLMENVEP, DEVTLLAVLSACADLGSLELGERICSYVDHRGMNR, AVSLNNAVIDMYAKSGNITKALDVFECVNER, NVVTWTTIIAGLATHGHGAEALAMFNRMVKAGVRP, NDVTFIAILSACSHVGWVDLGKRLFNSMRSK, and NIEHYGCMIDLLGRAGKLREADEVIKSMPFKANAA. Positions 421-496 are type E motif; the sequence is IWGSLLAASN…MAGESSIEVE (76 aa). Positions 497-527 are type E(+) motif; the sequence is NRVYKFISGDLTHPQVERIHEILQEMDLQIQ.

It belongs to the PPR family. PCMP-E subfamily.

This chain is Pentatricopeptide repeat-containing protein At5g56310 (PCMP-E13), found in Arabidopsis thaliana (Mouse-ear cress).